Consider the following 39-residue polypeptide: Protein disulfide-isomerase A3 (39 aa).

The protein belongs to the protein disulfide isomerase family. Part of the major histocompatibility complex class I (MHC I) peptide loading complex composed of TAP1, TAP2, B2M, MHC heavy chain, TAPBP, PDIA3, and CALR. Interacts with ERP27 and CANX. Interacts with SERPINA2 and with SERPINA1. Interacts with ATP2A2. Within the major histocompatibility complex class I (MHC I) peptide loading complex forms reversible disulfide-linked heterodimers with TAPBP as part of its protein folding chaperone activity. This is essential to assist the dynamic assembly of the MHC I complex with high affinity antigens in the endoplasmic reticulum. In terms of processing, phosphorylated. As to expression, predominantly expressed in liver. Low in brain, testis and colon. Not detectable in pancreas and skeletal muscle.

The protein resides in the endoplasmic reticulum. It is found in the endoplasmic reticulum lumen. The protein localises to the melanosome. The enzyme catalyses Catalyzes the rearrangement of -S-S- bonds in proteins.. In terms of biological role, protein disulfide isomerase that catalyzes the formation, isomerization, and reduction or oxidation of disulfide bonds in client proteins and functions as a protein folding chaperone. Core component of the major histocompatibility complex class I (MHC I) peptide loading complex where it functions as an essential folding chaperone for TAPBP. Through TAPBP, assists the dynamic assembly of the MHC I complex with high affinity antigens in the endoplasmic reticulum. Therefore, plays a crucial role in the presentation of antigens to cytotoxic T cells in adaptive immunity. This Papio hamadryas (Hamadryas baboon) protein is Protein disulfide-isomerase A3 (PDIA3).